The primary structure comprises 212 residues: MKNGILISLEGPEGAGKSSVLEALLPFLQNYGTGLITTREPGGVQIAEAIREVILEPSHTAMDAKTELLLYIASRRQHLTERVLPALAQGKLVLMDRFIDSSVAYQGYGRGLDVADIEWLNQFATDGLKPDLTLYFDIDVEEGLARIAKSESREVNRLDLEGLDLHQRVRQGYLAILDKEPERFVKVDASQPLDKVVADSLAIIQERFGNPS.

ATP is bound at residue 11–18; it reads GPEGAGKS.

This sequence belongs to the thymidylate kinase family.

It catalyses the reaction dTMP + ATP = dTDP + ADP. In terms of biological role, phosphorylation of dTMP to form dTDP in both de novo and salvage pathways of dTTP synthesis. This chain is Thymidylate kinase, found in Streptococcus sanguinis (strain SK36).